Reading from the N-terminus, the 426-residue chain is Protein prenyltransferase alpha subunit repeat-containing protein 1 (426 aa).

4 PFTA repeats span residues 86–119 (ALVDITSTLLLLNPDFTTAWNVRKELLQCGVLNP), 121–154 (KDLYLGKLALSKHPKSPETWIHRRWVLQRLQKEC), 180–213 (EEMRVCAEAAGRYPSNYNAWSHRIWVLQNMAKGN), and 219–252 (DELSSTRLWVSMHVSDHSGFHYRQHLLKALAKEL). Residues 255–279 (AAEKDVHTSQQPNGENTATASDDNH) are disordered. Over residues 262–275 (TSQQPNGENTATAS) the composition is skewed to polar residues. One copy of the PFTA 5 repeat lies at 290–323 (EEIQLCTDLIESYPGHETLWCHRRHVFYLWHQWR).

This sequence belongs to the protein prenyltransferase subunit alpha family.

This Danio rerio (Zebrafish) protein is Protein prenyltransferase alpha subunit repeat-containing protein 1 (ptar1).